The chain runs to 80 residues: Small ribosomal subunit protein uS17 (80 aa).

It belongs to the universal ribosomal protein uS17 family. As to quaternary structure, part of the 30S ribosomal subunit.

Its function is as follows. One of the primary rRNA binding proteins, it binds specifically to the 5'-end of 16S ribosomal RNA. This Brucella anthropi (strain ATCC 49188 / DSM 6882 / CCUG 24695 / JCM 21032 / LMG 3331 / NBRC 15819 / NCTC 12168 / Alc 37) (Ochrobactrum anthropi) protein is Small ribosomal subunit protein uS17.